The following is a 127-amino-acid chain: Large ribosomal subunit protein bL17 (127 aa).

This sequence belongs to the bacterial ribosomal protein bL17 family. Part of the 50S ribosomal subunit. Contacts protein L32.

The protein is Large ribosomal subunit protein bL17 of Escherichia fergusonii (strain ATCC 35469 / DSM 13698 / CCUG 18766 / IAM 14443 / JCM 21226 / LMG 7866 / NBRC 102419 / NCTC 12128 / CDC 0568-73).